Here is a 242-residue protein sequence, read N- to C-terminus: Probable ergothioneine transport ATP-binding protein EgtUA (242 aa).

An ABC transporter domain is found at 2 to 236 (IEYKNVALRY…PATDFVADLF (235 aa)). 34-41 (GPSGSGKT) lines the ATP pocket.

It belongs to the ABC transporter superfamily. As to quaternary structure, the complex is probably composed of at least an ATP-binding protein (EgtUA) and a transmembrane protein (EgtUBC).

The protein resides in the cell inner membrane. The catalysed reaction is ergothioneine(out) + ATP + H2O = ergothioneine(in) + ADP + phosphate + H(+). In terms of biological role, part of an ABC transporter complex EgtU required for the uptake of ergothioneine (EGT), a natural low-molecular weight (LMW) thiol antioxidant. Probably responsible for energy coupling to the transport system. This is Probable ergothioneine transport ATP-binding protein EgtUA from Streptococcus pneumoniae serotype 2 (strain D39 / NCTC 7466).